A 231-amino-acid chain; its full sequence is Enolase-phosphatase E1 (231 aa).

Residues 206 to 231 (LLERPGNAPQPKHSHPKISSFENFNP) form a disordered region.

This sequence belongs to the HAD-like hydrolase superfamily. MasA/MtnC family. Monomer. Requires Mg(2+) as cofactor.

It carries out the reaction 5-methylsulfanyl-2,3-dioxopentyl phosphate + H2O = 1,2-dihydroxy-5-(methylsulfanyl)pent-1-en-3-one + phosphate. Its pathway is amino-acid biosynthesis; L-methionine biosynthesis via salvage pathway; L-methionine from S-methyl-5-thio-alpha-D-ribose 1-phosphate: step 3/6. It functions in the pathway amino-acid biosynthesis; L-methionine biosynthesis via salvage pathway; L-methionine from S-methyl-5-thio-alpha-D-ribose 1-phosphate: step 4/6. Functionally, bifunctional enzyme that catalyzes the enolization of 2,3-diketo-5-methylthiopentyl-1-phosphate (DK-MTP-1-P) into the intermediate 2-hydroxy-3-keto-5-methylthiopentenyl-1-phosphate (HK-MTPenyl-1-P), which is then dephosphorylated to form the acireductone 1,2-dihydroxy-3-keto-5-methylthiopentene (DHK-MTPene). In Leptospira borgpetersenii serovar Hardjo-bovis (strain JB197), this protein is Enolase-phosphatase E1.